A 259-amino-acid chain; its full sequence is uncharacterized protein (259 aa).

3 helical membrane passes run Ile-55–Ile-75, Phe-85–Ser-105, and Phe-127–Gly-147.

The protein resides in the membrane. This is an uncharacterized protein from Arabidopsis thaliana (Mouse-ear cress).